The sequence spans 277 residues: Small ribosomal subunit protein uS2 (277 aa).

The interval 254 to 277 is disordered; sequence LAGAGSSALNDSGADLSEANPTEA.

It belongs to the universal ribosomal protein uS2 family.

In Mycobacterium leprae (strain TN), this protein is Small ribosomal subunit protein uS2 (rpsB).